Reading from the N-terminus, the 288-residue chain is Acetyl-coenzyme A carboxylase carboxyl transferase subunit beta (288 aa).

The 255-residue stretch at Leu-34–Gln-288 folds into the CoA carboxyltransferase N-terminal domain. 4 residues coordinate Zn(2+): Cys-38, Cys-41, Cys-56, and Cys-59. The segment at Cys-38–Cys-59 adopts a C4-type zinc-finger fold.

The protein belongs to the AccD/PCCB family. In terms of assembly, acetyl-CoA carboxylase is a heterohexamer composed of biotin carboxyl carrier protein (AccB), biotin carboxylase (AccC) and two subunits each of ACCase subunit alpha (AccA) and ACCase subunit beta (AccD). Requires Zn(2+) as cofactor.

The protein resides in the cytoplasm. The enzyme catalyses N(6)-carboxybiotinyl-L-lysyl-[protein] + acetyl-CoA = N(6)-biotinyl-L-lysyl-[protein] + malonyl-CoA. It functions in the pathway lipid metabolism; malonyl-CoA biosynthesis; malonyl-CoA from acetyl-CoA: step 1/1. Its function is as follows. Component of the acetyl coenzyme A carboxylase (ACC) complex. Biotin carboxylase (BC) catalyzes the carboxylation of biotin on its carrier protein (BCCP) and then the CO(2) group is transferred by the transcarboxylase to acetyl-CoA to form malonyl-CoA. This Streptococcus dysgalactiae subsp. equisimilis (strain GGS_124) protein is Acetyl-coenzyme A carboxylase carboxyl transferase subunit beta.